The chain runs to 213 residues: Macrodontain-1 (213 aa).

Intrachain disulfides connect Cys-23/Cys-63, Cys-57/Cys-96, and Cys-153/Cys-201. The active site involves Cys-26. Active-site residues include His-159 and Asn-176.

As to quaternary structure, monomer. In terms of tissue distribution, fruits.

With respect to regulation, inhibited by the general cysteine protease inhibitor E64 (L-trans-epoxysuccinyl-leucylamide-(4-guanido)-butane). Functionally, cysteine protease that catalyzes the preferential cleavage: Ala-|-Xaa &gt; Gln-|-Xaa &gt; Tyr-Xaa &gt;&gt; Leu-|-Xaa &gt; Gly-|-Xaa. Hydrolyzes the synthetic peptide substrate Bz-Phe-Val-Arg-pNA. The polypeptide is Macrodontain-1 (Ananas macrodontes (False pineapple)).